An 859-amino-acid chain; its full sequence is Leucine--tRNA ligase (859 aa).

The 'HIGH' region signature appears at 42–52 (PYPSGRLHMGH). The short motif at 618-622 (KMSKS) is the 'KMSKS' region element. Lys-621 contributes to the ATP binding site.

Belongs to the class-I aminoacyl-tRNA synthetase family.

Its subcellular location is the cytoplasm. The catalysed reaction is tRNA(Leu) + L-leucine + ATP = L-leucyl-tRNA(Leu) + AMP + diphosphate. The sequence is that of Leucine--tRNA ligase from Shewanella amazonensis (strain ATCC BAA-1098 / SB2B).